The following is a 242-amino-acid chain: Protein unc-119 homolog B-A (242 aa).

The span at 1–20 (MSGSKREAALTGQPKDERKK) shows a compositional bias: basic and acidic residues. A disordered region spans residues 1–49 (MSGSKREAALTGQPKDERKKSGGGVINRLKARRVQGKESGTSDQSSVTP). Positions 38 to 48 (ESGTSDQSSVT) are enriched in polar residues. Y133 is a binding site for tetradecanoate.

It belongs to the PDE6D/unc-119 family.

In terms of biological role, myristoyl-binding protein that acts as a cargo adapter: specifically binds the myristoyl moiety of a subset of N-terminally myristoylated proteins and is required for their localization. Plays a key role in localization of proteins to the primary cilium membrane. This is Protein unc-119 homolog B-A (unc119b-a) from Xenopus laevis (African clawed frog).